The following is a 206-amino-acid chain: Guanylate kinase (206 aa).

The Guanylate kinase-like domain occupies 6–184 (GNLFILSAPS…ALTDIETIVM (179 aa)). 13–20 (APSGAGKS) contributes to the ATP binding site.

The protein belongs to the guanylate kinase family.

The protein localises to the cytoplasm. The catalysed reaction is GMP + ATP = GDP + ADP. In terms of biological role, essential for recycling GMP and indirectly, cGMP. The sequence is that of Guanylate kinase from Pseudoalteromonas translucida (strain TAC 125).